A 158-amino-acid polypeptide reads, in one-letter code: MKCPYCGYPDSKVIDSRPTDDNTSIRRRRECLKCGKRFTTYEKVEQLPILVIKKDNRREVYDRDKILKGMIKACEKRPVPIKVLEEITDEIDKRIINSMEREITSTEIGEMVMEKLKNVDEVAYVRFASVYRQFKDINTFMDELKKLLKENETKKEKT.

Residues Cys-3 to Cys-34 fold into a zinc finger. Residues Ile-49 to Thr-139 form the ATP-cone domain.

It belongs to the NrdR family. It depends on Zn(2+) as a cofactor.

Negatively regulates transcription of bacterial ribonucleotide reductase nrd genes and operons by binding to NrdR-boxes. The chain is Transcriptional repressor NrdR from Thermoanaerobacter pseudethanolicus (strain ATCC 33223 / 39E) (Clostridium thermohydrosulfuricum).